The primary structure comprises 170 residues: 3-hydroxyanthranilate 3,4-dioxygenase (170 aa).

Arginine 44 is an O2 binding site. Residues histidine 48, glutamate 54, and histidine 92 each contribute to the Fe cation site. Glutamate 54 lines the substrate pocket. Residues arginine 96 and glutamate 106 each coordinate substrate. The a divalent metal cation site is built by cysteine 121, cysteine 124, cysteine 158, and cysteine 161.

This sequence belongs to the 3-HAO family. Fe(2+) serves as cofactor.

The protein resides in the cytoplasm. The enzyme catalyses 3-hydroxyanthranilate + O2 = (2Z,4Z)-2-amino-3-carboxymuconate 6-semialdehyde. It functions in the pathway cofactor biosynthesis; NAD(+) biosynthesis; quinolinate from L-kynurenine: step 3/3. Its function is as follows. Catalyzes the oxidative ring opening of 3-hydroxyanthranilate to 2-amino-3-carboxymuconate semialdehyde, which spontaneously cyclizes to quinolinate. In Scheffersomyces stipitis (strain ATCC 58785 / CBS 6054 / NBRC 10063 / NRRL Y-11545) (Yeast), this protein is 3-hydroxyanthranilate 3,4-dioxygenase.